Consider the following 319-residue polypeptide: MTIILTDPVCPVCEFPSNVELHFGGLVCGACAAFFRRTVSLNIRYLCEKKNQCKGKRKNCRACRFDYCVKIAGMKRNLVRQRKNSTNTPMYILNRRKDSGNEEVVRGFVTSTQSKWAQHSRKSSMSPNKEAEKDVSKILKISHGRLLKYYIYQITQGKWVNMNTLNIKSVEEFLEITSIHNKLAAEICKTCPGVDLLDNEDILTIRKYFQFSNVWIESAWNYLMSADKHVQIDDSELDLTLLKFINQVKSTLLVSLSQLKFNTIEFAAFKSICIWKLVYHGTSRAMKIIAQEHYEGVAKALNDYYQTYTSMKKSRYLQF.

Residues 7–81 (DPVCPVCEFP…AGMKRNLVRQ (75 aa)) constitute a DNA-binding region (nuclear receptor). NR C4-type zinc fingers lie at residues 10 to 31 (CPVC…CGAC) and 47 to 63 (CEKK…CRAC). The NR LBD domain maps to 130-319 (EAEKDVSKIL…SMKKSRYLQF (190 aa)).

It belongs to the nuclear hormone receptor family.

The protein resides in the nucleus. Orphan nuclear receptor. This is Nuclear hormone receptor family member nhr-174 (nhr-174) from Caenorhabditis elegans.